Here is a 415-residue protein sequence, read N- to C-terminus: 2-oxoadipate dioxygenase/decarboxylase (415 aa).

3 residues coordinate 2-oxoadipate: His66, Arg70, and His225. Residue His66 coordinates Fe(2+). His225 and Glu296 together coordinate Fe(2+). Position 361 (Ala361) interacts with 2-oxoadipate.

Belongs to the 2-oxoadipate dioxygenase/decarboxylase family. The cofactor is Fe(2+).

The catalysed reaction is 2-oxoadipate + O2 = (R)-2-hydroxyglutarate + CO2. Functionally, catalyzes the decarboxylation and hydroxylation of 2-oxoadipate (2OA) to form D-2-hydroxyglutarate (D-2-HGA). In Mycobacterium bovis (strain ATCC BAA-935 / AF2122/97), this protein is 2-oxoadipate dioxygenase/decarboxylase.